The following is a 178-amino-acid chain: Protein GrpE (178 aa).

The disordered stretch occupies residues 1-22 (MSENQNPSPSPEEIEAAMSANA).

This sequence belongs to the GrpE family. Homodimer.

The protein resides in the cytoplasm. Functionally, participates actively in the response to hyperosmotic and heat shock by preventing the aggregation of stress-denatured proteins, in association with DnaK and GrpE. It is the nucleotide exchange factor for DnaK and may function as a thermosensor. Unfolded proteins bind initially to DnaJ; upon interaction with the DnaJ-bound protein, DnaK hydrolyzes its bound ATP, resulting in the formation of a stable complex. GrpE releases ADP from DnaK; ATP binding to DnaK triggers the release of the substrate protein, thus completing the reaction cycle. Several rounds of ATP-dependent interactions between DnaJ, DnaK and GrpE are required for fully efficient folding. In Acidovorax ebreus (strain TPSY) (Diaphorobacter sp. (strain TPSY)), this protein is Protein GrpE.